The sequence spans 692 residues: Elongation factor G (692 aa).

Residues 8–282 (DKTRNIGIMA…AVLDYLPAPT (275 aa)) form the tr-type G domain. Residues 17 to 24 (AHIDAGKT), 81 to 85 (DTPGH), and 135 to 138 (NKMD) contribute to the GTP site.

It belongs to the TRAFAC class translation factor GTPase superfamily. Classic translation factor GTPase family. EF-G/EF-2 subfamily.

Its subcellular location is the cytoplasm. Functionally, catalyzes the GTP-dependent ribosomal translocation step during translation elongation. During this step, the ribosome changes from the pre-translocational (PRE) to the post-translocational (POST) state as the newly formed A-site-bound peptidyl-tRNA and P-site-bound deacylated tRNA move to the P and E sites, respectively. Catalyzes the coordinated movement of the two tRNA molecules, the mRNA and conformational changes in the ribosome. This Bacillus pumilus (strain SAFR-032) protein is Elongation factor G.